The following is a 1388-amino-acid chain: Rho-associated protein kinase 2 (1388 aa).

The segment at 1–24 (MSRPPPTGKMPGAPEAVSGDGAGA) is disordered. The Protein kinase domain maps to 92-354 (YDVVKVIGRG…VEEIKQHPFF (263 aa)). Residues 98-106 (IGRGAFGEV) and lysine 121 each bind ATP. The active-site Proton acceptor is aspartate 214. The AGC-kinase C-terminal domain maps to 357–425 (DQWNWDNIRE…YRENLLLSDS (69 aa)). The segment at 363–784 (NIRETAAPVV…INELLKQKDV (422 aa)) is interaction with PPP1R12A. The interval 373–420 (PELSSDIDSSNFDDIEDDKGDVETFPIPKAFVGNQLPFIGFTYYRENL) is interaction with NPM1. Threonine 414 bears the Phosphothreonine; by ROCK2 mark. Coiled coils occupy residues 439–1025 (NEES…KQLL) and 1053–1131 (DTDV…IGLD). An REM-1 domain is found at 497-573 (TLRQLEREKA…LDETNALLRT (77 aa)). A compositionally biased stretch (basic and acidic residues) spans 512–530 (NAEYQRKADHEADKKRNLE). A disordered region spans residues 512–532 (NAEYQRKADHEADKKRNLEND). Phosphotyrosine; by SRC is present on tyrosine 722. One can recognise a RhoBD domain in the interval 979 to 1047 (TSDVANLANE…LAEIMNRKEP (69 aa)). The tract at residues 979-1047 (TSDVANLANE…LAEIMNRKEP (69 aa)) is RHOA binding. Phosphoserine is present on serine 1137. Residues 1150 to 1349 (ESRLEGWLSL…WVSRLVKKIP (200 aa)) enclose the PH domain. Residue threonine 1212 is modified to Phosphothreonine. The segment at 1260–1315 (GHEFIPTLYHFPTNCEACMKPLWHMFKPPPALECRRCHIKCHKDHMDKKEEIIAPC) adopts a Phorbol-ester/DAG-type zinc-finger fold. The tract at residues 1345-1388 (VKKIPKKPPAPDPFARSSPRTSMKIQQNQSIRRPSRQLAPNKPS) is disordered. Phosphoserine is present on residues serine 1362 and serine 1374. A compositionally biased stretch (polar residues) spans 1362 to 1376 (SPRTSMKIQQNQSIR).

The protein belongs to the protein kinase superfamily. AGC Ser/Thr protein kinase family. In terms of assembly, homodimer. Interacts with IRS1. Interacts with RAF1. Interacts with RHOA (activated by GTP). Interacts with RHOB and RHOC. Interacts with PPP1R12A. Interacts with EP300. Interacts with CHORDC1. Interacts with BRCA2. Interacts with NPM1; this interaction enhances ROCK2 activity. Interacts with SORL1. Interacts with PJVK. Mg(2+) serves as cofactor. In terms of processing, autophosphorylated. Phosphorylation at Tyr-722 reduces its binding to RHOA and is crucial for focal adhesion dynamics. Dephosphorylation by PTPN11 stimulates its RHOA binding activity. Post-translationally, cleaved by granzyme B during apoptosis. This leads to constitutive activation of the kinase and membrane blebbing. Highly expressed in whole brain and in cerebellum, and at lower levels in heart and lung. Detected at low levels in skeletal muscle, spleen, liver, kidney and pancreas.

It is found in the cytoplasm. The protein localises to the cell membrane. The protein resides in the nucleus. Its subcellular location is the cytoskeleton. It localises to the microtubule organizing center. It is found in the centrosome. It carries out the reaction L-seryl-[protein] + ATP = O-phospho-L-seryl-[protein] + ADP + H(+). The catalysed reaction is L-threonyl-[protein] + ATP = O-phospho-L-threonyl-[protein] + ADP + H(+). Activated by RHOA binding. Inhibited by Y-27632. Functionally, protein kinase which is a key regulator of actin cytoskeleton and cell polarity. Involved in regulation of smooth muscle contraction, actin cytoskeleton organization, stress fiber and focal adhesion formation, neurite retraction, cell adhesion and motility via phosphorylation of ADD1, BRCA2, CNN1, EZR, DPYSL2, EP300, MSN, MYL9/MLC2, NPM1, RDX, PPP1R12A and VIM. Phosphorylates SORL1 and IRF4. Acts as a negative regulator of VEGF-induced angiogenic endothelial cell activation. Positively regulates the activation of p42/MAPK1-p44/MAPK3 and of p90RSK/RPS6KA1 during myogenic differentiation. Plays an important role in the timely initiation of centrosome duplication. Inhibits keratinocyte terminal differentiation. May regulate closure of the eyelids and ventral body wall through organization of actomyosin bundles. Plays a critical role in the regulation of spine and synaptic properties in the hippocampus. Plays an important role in generating the circadian rhythm of the aortic myofilament Ca(2+) sensitivity and vascular contractility by modulating the myosin light chain phosphorylation. The chain is Rho-associated protein kinase 2 (ROCK2) from Bos taurus (Bovine).